Consider the following 208-residue polypeptide: V-type ATP synthase subunit D (208 aa).

This sequence belongs to the V-ATPase D subunit family.

In terms of biological role, produces ATP from ADP in the presence of a proton gradient across the membrane. The polypeptide is V-type ATP synthase subunit D (Streptococcus pyogenes serotype M49 (strain NZ131)).